Consider the following 92-residue polypeptide: Small ribosomal subunit protein uS19 (92 aa).

This sequence belongs to the universal ribosomal protein uS19 family.

In terms of biological role, protein S19 forms a complex with S13 that binds strongly to the 16S ribosomal RNA. The protein is Small ribosomal subunit protein uS19 of Tolumonas auensis (strain DSM 9187 / NBRC 110442 / TA 4).